We begin with the raw amino-acid sequence, 100 residues long: Small ribosomal subunit protein uS14c (100 aa).

Belongs to the universal ribosomal protein uS14 family. In terms of assembly, part of the 30S ribosomal subunit.

Its subcellular location is the plastid. The protein resides in the chloroplast. Functionally, binds 16S rRNA, required for the assembly of 30S particles. The sequence is that of Small ribosomal subunit protein uS14c from Nasturtium officinale (Watercress).